The following is a 207-amino-acid chain: uncharacterized protein (207 aa).

The first 19 residues, Met1–Ser19, serve as a signal peptide directing secretion.

This sequence to P.aeruginosa PA4490 and T.maritima TM0986.

This is an uncharacterized protein from Escherichia coli (strain K12).